Reading from the N-terminus, the 201-residue chain is 3-mercaptopropionate dioxygenase (201 aa).

Residues histidine 89, histidine 91, and histidine 142 each contribute to the Fe cation site.

This sequence belongs to the cysteine dioxygenase family. In terms of assembly, forms homodimer in the crystal; however, there is no evidence that the dimer exists under physiological conditions or has biological significance. Requires Fe(2+) as cofactor.

It catalyses the reaction 3-sulfanylpropanoate + O2 = 3-sulfinopropanoate + H(+). Thiol dioxygenase that catalyzes the dioxygenation of 3-mercaptopropionate (3-MPA) to 3-sulfinopropionate (3-SPA). To a lesser extent (40-fold lower efficiency), is also able to oxidize cysteine to cysteine sulfinate (CSA). Cannot use N-acetyl-L-cysteine, homocysteine, and cysteamine as substrates. The physiological role of this enzyme is unclear. The protein is 3-mercaptopropionate dioxygenase of Pseudomonas aeruginosa (strain ATCC 15692 / DSM 22644 / CIP 104116 / JCM 14847 / LMG 12228 / 1C / PRS 101 / PAO1).